Here is a 297-residue protein sequence, read N- to C-terminus: Transmembrane protein 169 (297 aa).

The segment at 1–88 is disordered; that stretch reads MEESAPVESQ…EGEDFLDYPG (88 aa). Residues 1 to 159 are Extracellular-facing; the sequence is MEESAPVESQ…CQVGADQGPH (159 aa). Low complexity predominate over residues 22-31; it reads RRAVAAVLAL. Composition is skewed to acidic residues over residues 61–70 and 78–88; these read KTDEEPEESE and EEGEDFLDYPG. The chain crosses the membrane as a helical span at residues 160 to 180; that stretch reads VVLWTLVCLPVVFVLSFVVSF. The Cytoplasmic segment spans residues 181–210; that stretch reads YYGTITWYNIFLVYNEERTFWHKISCCPCL. The helical transmembrane segment at 211–231 threads the bilayer; it reads ILFYPVLIMTMASSLGLYAAV. The Extracellular portion of the chain corresponds to 232–297; sequence AQLSWSWAAW…PIQEVETSTV (66 aa).

It localises to the membrane. The sequence is that of Transmembrane protein 169 (Tmem169) from Mus musculus (Mouse).